Consider the following 211-residue polypeptide: Pyridoxine/pyridoxamine 5'-phosphate oxidase (211 aa).

Substrate contacts are provided by residues 7 to 10 (RREY) and lysine 65. FMN contacts are provided by residues 60-65 (RTVLLK), 75-76 (YT), arginine 81, lysine 82, and glutamine 104. Tyrosine 122, arginine 126, and serine 130 together coordinate substrate. FMN is bound by residues 139-140 (QS) and tryptophan 184. A substrate-binding site is contributed by 190-192 (RLH). Arginine 194 contacts FMN.

The protein belongs to the pyridoxamine 5'-phosphate oxidase family. As to quaternary structure, homodimer. The cofactor is FMN.

The catalysed reaction is pyridoxamine 5'-phosphate + O2 + H2O = pyridoxal 5'-phosphate + H2O2 + NH4(+). It carries out the reaction pyridoxine 5'-phosphate + O2 = pyridoxal 5'-phosphate + H2O2. It participates in cofactor metabolism; pyridoxal 5'-phosphate salvage; pyridoxal 5'-phosphate from pyridoxamine 5'-phosphate: step 1/1. The protein operates within cofactor metabolism; pyridoxal 5'-phosphate salvage; pyridoxal 5'-phosphate from pyridoxine 5'-phosphate: step 1/1. In terms of biological role, catalyzes the oxidation of either pyridoxine 5'-phosphate (PNP) or pyridoxamine 5'-phosphate (PMP) into pyridoxal 5'-phosphate (PLP). The protein is Pyridoxine/pyridoxamine 5'-phosphate oxidase of Aeromonas hydrophila subsp. hydrophila (strain ATCC 7966 / DSM 30187 / BCRC 13018 / CCUG 14551 / JCM 1027 / KCTC 2358 / NCIMB 9240 / NCTC 8049).